The primary structure comprises 60 residues: Metallothionein A (60 aa).

The tract at residues 1–28 (MDPCECSKSGTCNCGGSCTCTNCSCKSC) is beta. A divalent metal cation contacts are provided by Cys4, Cys6, Cys12, Cys14, Cys18, Cys20, Cys23, Cys25, Cys28, Cys32, Cys33, Cys35, Cys36, Cys40, Cys43, Cys47, Cys49, Cys54, Cys58, and Cys59. Positions 29 to 60 (KKSCCPCCPSGCTKCASGCVCKGKTCDTSCCQ) are alpha.

Belongs to the metallothionein superfamily. Type 1 family.

In terms of biological role, metallothioneins have a high content of cysteine residues that bind various heavy metals. This is Metallothionein A (mta) from Chionodraco rastrospinosus (Ocellated icefish).